A 967-amino-acid polypeptide reads, in one-letter code: uncharacterized protein (967 aa).

Disordered stretches follow at residues 1–23 and 41–72; these read MQNAPKCYLPNSRKGRDVNFHDR and FTMHSESIGPKSLDSLSPRRLSNYSSAVDPRT. The segment covering 14–23 has biased composition (basic and acidic residues); the sequence is KGRDVNFHDR. The segment covering 60–72 has biased composition (polar residues); it reads RLSNYSSAVDPRT. Ser86 is modified (phosphoserine). Disordered stretches follow at residues 135-259, 271-296, 380-399, 437-464, and 499-544; these read AVSE…QHLP, SVSRSYQSPASTPRSSVSSVSSSPPE, DSTTEYVNTESSSKTPAPHK, HSYGSPKSLHHKSSSAGERPVSPTFVAD, and GTRF…KSLS. The span at 162–187 shows a compositional bias: polar residues; sequence ESSTSNNLETGNSTNTALHNVSSPLE. A compositionally biased stretch (basic and acidic residues) spans 205 to 218; sequence HDLDEVISEKDTSL. The span at 221 to 234 shows a compositional bias: basic residues; it reads RSSRGRSSAPKRRK. The segment covering 278 to 294 has biased composition (low complexity); sequence SPASTPRSSVSSVSSSP. A compositionally biased stretch (polar residues) spans 382-394; it reads TTEYVNTESSSKT. The span at 499 to 508 shows a compositional bias: basic residues; sequence GTRFHSRSSH. Position 585 is a phosphoserine (Ser585). Disordered regions lie at residues 594–665 and 681–708; these read ESNE…SVND and DHRIPASDNQNNNNNDANALAENSESQH. Positions 608–622 are enriched in basic and acidic residues; the sequence is YDSRESTGHTIKELR. Residues 686-704 are compositionally biased toward low complexity; that stretch reads ASDNQNNNNNDANALAENS. Residue 728–736 coordinates substrate; sequence PCVLDVKMG.

Belongs to the inositol phosphokinase (IPK) family.

Its subcellular location is the cytoplasm. This is an uncharacterized protein from Schizosaccharomyces pombe (strain 972 / ATCC 24843) (Fission yeast).